Reading from the N-terminus, the 264-residue chain is Small ribosomal subunit protein uS2 (264 aa).

The interval 228–264 (QLDAEDDYEDYDGSEYDDDYEETEYTDAVIPDEETEE) is disordered. A compositionally biased stretch (acidic residues) spans 230 to 264 (DAEDDYEDYDGSEYDDDYEETEYTDAVIPDEETEE).

The protein belongs to the universal ribosomal protein uS2 family.

This is Small ribosomal subunit protein uS2 from Nostoc punctiforme (strain ATCC 29133 / PCC 73102).